The sequence spans 364 residues: GDSL esterase/lipase EXL3 (364 aa).

Residues 1–32 form the signal peptide; that stretch reads MKDNSSWSCSCSWSSWKICLLSVLFLTETITA. S50 functions as the Nucleophile in the catalytic mechanism. Residues D339 and H342 contribute to the active site.

It belongs to the 'GDSL' lipolytic enzyme family. In terms of tissue distribution, flower buds.

Its subcellular location is the secreted. The sequence is that of GDSL esterase/lipase EXL3 (EXL3) from Arabidopsis thaliana (Mouse-ear cress).